The chain runs to 529 residues: MKKIMLIASAMSALSLPFSASAIELGDEGGLECGPYAKVGVVGGMITGVESTRLDPADAGGKKQLPLTTSMPFGGTLAAGMTIAPGFRAELGVMYLANVKAEVESGKTGSDADIRSGADSPMPQRYKLTPPQPTIMPISIADRDLGVDIPNVPQGGANHLGDNLGANDIRRADDRITWLKNYAGVDYMVPDPNNPQARIVNPVLLNIPQGPPNANPRQAMQPCSILNHDHWRHLVVGITAMSNANKPSVSPIKVLSEKIVQIYRDVKPFARVAGIEVPSDPLPNSASVEQIQNKMQELNDILDEIRDSFDGCIGGNAFANQIQLNFRIPQAQQQGQGQQQQQAQATAQEAAAAAAVRVLNNNDQIIKLYKDLVKLKRHAGIKKAMEELAAQDGGCNGGGDNKKKRGASEDSDAGGASKGGKGKETKETEFDLSMIVGQVKLYADLFTTESFSIYAGLGAGLAYTSGKIDGVDIKANTGMVASGALGVAINAAEGVYVDIEGSYMHSFSKIEEKYSINPLMASFGVRYNF.

Positions 1–22 are cleaved as a signal peptide; the sequence is MKKIMLIASAMSALSLPFSASA. The chain crosses the membrane as a helical span at residues 67 to 87; sequence LTTSMPFGGTLAAGMTIAPGF. Over residues 106 to 116 the composition is skewed to basic and acidic residues; that stretch reads GKTGSDADIRS. Disordered stretches follow at residues 106–134 and 392–424; these read GKTG…PQPT and DGGC…KGKE. The helical transmembrane segment at 477 to 492 threads the bilayer; that stretch reads TGMVASGALGVAINAA.

Its subcellular location is the cell membrane. In terms of biological role, may be an adherent factor for rickettsial adsorption to the host-cell surface and a determinant of virulence of individual rickettsial strain. It is the major outer membrane protein. The sequence is that of 56 kDa type-specific antigen from Orientia tsutsugamushi (Rickettsia tsutsugamushi).